The following is an 83-amino-acid chain: Antitoxin ParD1 (83 aa).

A coiled-coil region spans residues I33–S60. The tract at residues L54 to R83 is disordered.

Belongs to the ParD antitoxin family.

Its function is as follows. Antitoxin component of a type II toxin-antitoxin (TA) system. In Mycobacterium tuberculosis (strain CDC 1551 / Oshkosh), this protein is Antitoxin ParD1 (parD1).